The chain runs to 83 residues: MSGNTGERPFADIITSIRYWVIHSITIPSLFIAGWLFVSTGLAYDVFGSPRPNEYFTESRQEVPLITGRFNSLEQVDEFTRSF.

Residues 21–35 (VIHSITIPSLFIAGW) traverse the membrane as a helical segment. H23 contributes to the heme binding site.

The protein belongs to the PsbE/PsbF family. Heterodimer of an alpha subunit and a beta subunit. PSII is composed of 1 copy each of membrane proteins PsbA, PsbB, PsbC, PsbD, PsbE, PsbF, PsbH, PsbI, PsbJ, PsbK, PsbL, PsbM, PsbT, PsbX, PsbY, PsbZ, Psb30/Ycf12, at least 3 peripheral proteins of the oxygen-evolving complex and a large number of cofactors. It forms dimeric complexes. Heme b is required as a cofactor.

Its subcellular location is the plastid. It is found in the chloroplast thylakoid membrane. Functionally, this b-type cytochrome is tightly associated with the reaction center of photosystem II (PSII). PSII is a light-driven water:plastoquinone oxidoreductase that uses light energy to abstract electrons from H(2)O, generating O(2) and a proton gradient subsequently used for ATP formation. It consists of a core antenna complex that captures photons, and an electron transfer chain that converts photonic excitation into a charge separation. The chain is Cytochrome b559 subunit alpha from Physcomitrium patens (Spreading-leaved earth moss).